A 61-amino-acid chain; its full sequence is Small ribosomal subunit protein uS14 (61 aa).

Positions 24, 27, 40, and 43 each coordinate Zn(2+).

Belongs to the universal ribosomal protein uS14 family. Zinc-binding uS14 subfamily. As to quaternary structure, part of the 30S ribosomal subunit. Contacts proteins S3 and S10. It depends on Zn(2+) as a cofactor.

Its function is as follows. Binds 16S rRNA, required for the assembly of 30S particles and may also be responsible for determining the conformation of the 16S rRNA at the A site. In Nautilia profundicola (strain ATCC BAA-1463 / DSM 18972 / AmH), this protein is Small ribosomal subunit protein uS14.